Here is a 314-residue protein sequence, read N- to C-terminus: Olfactory receptor 5G29 (314 aa).

Over 1–25 (MEEKNQTIVMEFFFLGLTDHLYQKI) the chain is Extracellular. An N-linked (GlcNAc...) asparagine glycan is attached at Asn-5. Residues 26–46 (ALFITILFVYLVTLGGNLGMI) traverse the membrane as a helical segment. The Cytoplasmic portion of the chain corresponds to 47–54 (TLIWADPR). The chain crosses the membrane as a helical span at residues 55–75 (LHTPMYFFLSHLSFVDMCSSS). The Extracellular segment spans residues 76–99 (SIAPKMLCDIFAEEKRISFMGCAA). Cys-97 and Cys-189 are joined by a disulfide. Residues 100–120 (QMWFFGFFVGTECFLLASMAY) traverse the membrane as a helical segment. The Cytoplasmic portion of the chain corresponds to 121–133 (DRYTAICKPLLYT). A helical membrane pass occupies residues 134–154 (LLMSQRVCVHLVVGPYVFAII). Over 155–196 (NITTHTTLAFCLPFCGSNTINHFFCDVSPLLSLACADSWVNK) the chain is Extracellular. The chain crosses the membrane as a helical span at residues 197-217 (VVLFVLSGAIGVFSGLIIIVS). Residues 218-237 (YVSILMTIFKIQTADGKQKA) lie on the Cytoplasmic side of the membrane. A helical transmembrane segment spans residues 238-258 (FSTCSSHLSAVSILYGTLFFI). Over 259-271 (YVRPSASFSLNIN) the chain is Extracellular. A helical membrane pass occupies residues 272 to 292 (KMISLFYTVVIPMLNPLIYSL). The Cytoplasmic segment spans residues 293-312 (RNKEVKGAFRRKVQKKHFPA).

Belongs to the G-protein coupled receptor 1 family.

It localises to the cell membrane. Functionally, potential odorant receptor. This is Olfactory receptor 5G29 from Mus musculus (Mouse).